The chain runs to 399 residues: Enoyl-[acyl-carrier-protein] reductase [NADH] (399 aa).

NAD(+)-binding positions include 48–53 (GASTGY), 74–75 (FE), 111–112 (DA), and 139–140 (LA). Residue tyrosine 225 participates in substrate binding. Tyrosine 235 (proton donor) is an active-site residue. NAD(+) contacts are provided by residues lysine 244 and 274 to 276 (VVT).

It belongs to the TER reductase family. As to quaternary structure, monomer.

The catalysed reaction is a 2,3-saturated acyl-[ACP] + NAD(+) = a (2E)-enoyl-[ACP] + NADH + H(+). It participates in lipid metabolism; fatty acid biosynthesis. Its function is as follows. Involved in the final reduction of the elongation cycle of fatty acid synthesis (FAS II). Catalyzes the reduction of a carbon-carbon double bond in an enoyl moiety that is covalently linked to an acyl carrier protein (ACP). This is Enoyl-[acyl-carrier-protein] reductase [NADH] from Yersinia enterocolitica serotype O:8 / biotype 1B (strain NCTC 13174 / 8081).